Here is a 454-residue protein sequence, read N- to C-terminus: tRNA modification GTPase MnmE (454 aa).

The (6S)-5-formyl-5,6,7,8-tetrahydrofolate site is built by Arg23, Glu80, and Lys120. In terms of domain architecture, TrmE-type G spans 216–377 (GMKVVIAGRP…LRNHLKQSMG (162 aa)). Asn226 is a binding site for K(+). Residues 226–231 (NAGKSS), 245–251 (TDIAGTT), 270–273 (DTAG), 335–338 (NKAD), and 358–360 (SAR) contribute to the GTP site. Ser230 is a Mg(2+) binding site. Thr245, Ile247, and Thr250 together coordinate K(+). Thr251 serves as a coordination point for Mg(2+). Lys454 is a (6S)-5-formyl-5,6,7,8-tetrahydrofolate binding site.

It belongs to the TRAFAC class TrmE-Era-EngA-EngB-Septin-like GTPase superfamily. TrmE GTPase family. As to quaternary structure, homodimer. Heterotetramer of two MnmE and two MnmG subunits. Requires K(+) as cofactor.

It is found in the cytoplasm. Exhibits a very high intrinsic GTPase hydrolysis rate. Involved in the addition of a carboxymethylaminomethyl (cmnm) group at the wobble position (U34) of certain tRNAs, forming tRNA-cmnm(5)s(2)U34. The polypeptide is tRNA modification GTPase MnmE (Shigella flexneri serotype 5b (strain 8401)).